The primary structure comprises 264 residues: Proteasome subunit alpha type-4 (264 aa).

The protein belongs to the peptidase T1A family. The 26S proteasome consists of a 20S proteasome core and two 19S regulatory subunits. The 20S proteasome core is composed of 28 subunits that are arranged in four stacked rings, resulting in a barrel-shaped structure. The two end rings are each formed by seven alpha subunits, and the two central rings are each formed by seven beta subunits. The catalytic chamber with the active sites is on the inside of the barrel. Interacts with PI31.

It localises to the cytoplasm. Its subcellular location is the nucleus. In terms of biological role, the proteasome is a multicatalytic proteinase complex which is characterized by its ability to cleave peptides with Arg, Phe, Tyr, Leu, and Glu adjacent to the leaving group at neutral or slightly basic pH. The proteasome has an ATP-dependent proteolytic activity. The chain is Proteasome subunit alpha type-4 (Prosalpha3) from Drosophila melanogaster (Fruit fly).